Reading from the N-terminus, the 66-residue chain is Large ribosomal subunit protein bL32 (66 aa).

Belongs to the bacterial ribosomal protein bL32 family.

The protein is Large ribosomal subunit protein bL32 of Rickettsia akari (strain Hartford).